The primary structure comprises 290 residues: Glycine--tRNA ligase alpha subunit (290 aa).

The protein belongs to the class-II aminoacyl-tRNA synthetase family. In terms of assembly, tetramer of two alpha and two beta subunits.

The protein localises to the cytoplasm. It catalyses the reaction tRNA(Gly) + glycine + ATP = glycyl-tRNA(Gly) + AMP + diphosphate. The chain is Glycine--tRNA ligase alpha subunit from Synechococcus sp. (strain CC9902).